The chain runs to 929 residues: Ras guanine nucleotide exchange factor M (929 aa).

Polar residues predominate over residues 1-15 (MWQKPSLTKSMMNEV). Disordered regions lie at residues 1-102 (MWQK…AAGS) and 169-316 (TNNN…SKSL). Residues 16 to 33 (SSNSPKSPTLTSSPSTQS) show a composition bias toward low complexity. A compositionally biased stretch (gly residues) spans 44-67 (LDGGGGGSNRLIFGGSGGGSGGGS). Low complexity-rich tracts occupy residues 68–80 (LPSSPVSSPVNPF) and 169–191 (TNNNTTTTTNTNNSNNNNSNNDG). The segment covering 192–202 (SGSGSGAGGSF) has biased composition (gly residues). The segment covering 203-246 (IGTTTSAKTTSTTSTSAATTTTTTTTSSSSSSPSSSSPSSTSPT) has biased composition (low complexity). The segment covering 247 to 256 (IASNNDNNNK) has biased composition (polar residues). Low complexity predominate over residues 270–287 (PPLTLSQSQTQQQQQQKV). The segment covering 295-305 (RFSTNSSGSQS) has biased composition (polar residues). Residues 390-528 (NKFVVVSGPK…PILDLYEKLK (139 aa)) enclose the N-terminal Ras-GEF domain. Positions 540 to 583 (SLSGSGGISNNNNGSDLKNSNNGNNSSNNNNSSSNSSSSSSSSD) are disordered. A Ras-GEF domain is found at 676-911 (SPQDIAKQLT…YAFSKFIESP (236 aa)).

Its function is as follows. Promotes the exchange of Ras-bound GDP by GTP. The polypeptide is Ras guanine nucleotide exchange factor M (gefM) (Dictyostelium discoideum (Social amoeba)).